Consider the following 358-residue polypeptide: 3-dehydroquinate synthase (358 aa).

Residues 69–74 (DGEAHK), 103–107 (GVIGD), 127–128 (TT), lysine 140, lysine 149, and 167–170 (CLRT) each bind NAD(+). The Zn(2+) site is built by glutamate 182, histidine 245, and histidine 262.

It belongs to the sugar phosphate cyclases superfamily. Dehydroquinate synthase family. The cofactor is Co(2+). It depends on Zn(2+) as a cofactor. NAD(+) serves as cofactor.

Its subcellular location is the cytoplasm. It carries out the reaction 7-phospho-2-dehydro-3-deoxy-D-arabino-heptonate = 3-dehydroquinate + phosphate. The protein operates within metabolic intermediate biosynthesis; chorismate biosynthesis; chorismate from D-erythrose 4-phosphate and phosphoenolpyruvate: step 2/7. Catalyzes the conversion of 3-deoxy-D-arabino-heptulosonate 7-phosphate (DAHP) to dehydroquinate (DHQ). In Tolumonas auensis (strain DSM 9187 / NBRC 110442 / TA 4), this protein is 3-dehydroquinate synthase.